Here is a 142-residue protein sequence, read N- to C-terminus: UPF0102 protein Bcep18194_A3391 (142 aa).

The segment at 1-27 (MCHAAPARPGDGRGLPRAGDNFSGAAR) is disordered.

The protein belongs to the UPF0102 family.

The polypeptide is UPF0102 protein Bcep18194_A3391 (Burkholderia lata (strain ATCC 17760 / DSM 23089 / LMG 22485 / NCIMB 9086 / R18194 / 383)).